Reading from the N-terminus, the 366-residue chain is Putative zinc metalloprotease slr1821 (366 aa).

His20 is a binding site for Zn(2+). The active site involves Glu21. Residue His24 coordinates Zn(2+). A run of 3 helical transmembrane segments spans residues 95-115 (AIVISAGVIANLVFAYFLLIG), 293-313 (AVINILPLPALDGGQLVFLLI), and 325-345 (FQMGVMQTGLVLLLSLGVFLI). In terms of domain architecture, PDZ spans 106–188 (LVFAYFLLIG…VPITVEVQRG (83 aa)).

It belongs to the peptidase M50B family. Requires Zn(2+) as cofactor.

The protein localises to the cell inner membrane. This Synechocystis sp. (strain ATCC 27184 / PCC 6803 / Kazusa) protein is Putative zinc metalloprotease slr1821.